Consider the following 121-residue polypeptide: Large ribosomal subunit protein bL12 (121 aa).

This sequence belongs to the bacterial ribosomal protein bL12 family. Homodimer. Part of the ribosomal stalk of the 50S ribosomal subunit. Forms a multimeric L10(L12)X complex, where L10 forms an elongated spine to which 2 to 4 L12 dimers bind in a sequential fashion. Binds GTP-bound translation factors.

Forms part of the ribosomal stalk which helps the ribosome interact with GTP-bound translation factors. Is thus essential for accurate translation. In Streptococcus equi subsp. equi (strain 4047), this protein is Large ribosomal subunit protein bL12.